The primary structure comprises 121 residues: Large ribosomal subunit protein uL18 (121 aa).

The protein belongs to the universal ribosomal protein uL18 family. Part of the 50S ribosomal subunit; part of the 5S rRNA/L5/L18/L25 subcomplex. Contacts the 5S and 23S rRNAs.

In terms of biological role, this is one of the proteins that bind and probably mediate the attachment of the 5S RNA into the large ribosomal subunit, where it forms part of the central protuberance. This is Large ribosomal subunit protein uL18 from Polaromonas naphthalenivorans (strain CJ2).